The chain runs to 304 residues: tRNA pseudouridine synthase B (304 aa).

Catalysis depends on Asp40, which acts as the Nucleophile.

Belongs to the pseudouridine synthase TruB family. Type 1 subfamily.

It catalyses the reaction uridine(55) in tRNA = pseudouridine(55) in tRNA. Functionally, responsible for synthesis of pseudouridine from uracil-55 in the psi GC loop of transfer RNAs. This chain is tRNA pseudouridine synthase B, found in Halalkalibacterium halodurans (strain ATCC BAA-125 / DSM 18197 / FERM 7344 / JCM 9153 / C-125) (Bacillus halodurans).